A 345-amino-acid chain; its full sequence is Beta-ketoacyl-[acyl-carrier-protein] synthase III (345 aa).

Residues Cys114 and His272 contribute to the active site. Positions 273–277 are ACP-binding; sequence QANQR. Asn302 is a catalytic residue.

Belongs to the thiolase-like superfamily. FabH family. In terms of assembly, homodimer.

It localises to the cytoplasm. The enzyme catalyses malonyl-[ACP] + acetyl-CoA + H(+) = 3-oxobutanoyl-[ACP] + CO2 + CoA. Its pathway is lipid metabolism; fatty acid biosynthesis. Functionally, catalyzes the condensation reaction of fatty acid synthesis by the addition to an acyl acceptor of two carbons from malonyl-ACP. Catalyzes the first condensation reaction which initiates fatty acid synthesis and may therefore play a role in governing the total rate of fatty acid production. Possesses both acetoacetyl-ACP synthase and acetyl transacylase activities. Its substrate specificity determines the biosynthesis of branched-chain and/or straight-chain of fatty acids. The polypeptide is Beta-ketoacyl-[acyl-carrier-protein] synthase III (Rhodopirellula baltica (strain DSM 10527 / NCIMB 13988 / SH1)).